The primary structure comprises 374 residues: S-adenosylmethionine:tRNA ribosyltransferase-isomerase (374 aa).

It belongs to the QueA family.

It localises to the cytoplasm. It carries out the reaction 7-aminomethyl-7-carbaguanosine(34) in tRNA + S-adenosyl-L-methionine = epoxyqueuosine(34) in tRNA + adenine + L-methionine + 2 H(+). It functions in the pathway tRNA modification; tRNA-queuosine biosynthesis. Functionally, synthesizes oQ from preQ1 in a single S-adenosylmethionine-requiring step. The ribosyl moiety of AdoMet is transferred and isomerized to the epoxycyclopentane residue of oQ. In Prochlorococcus marinus subsp. pastoris (strain CCMP1986 / NIES-2087 / MED4), this protein is S-adenosylmethionine:tRNA ribosyltransferase-isomerase (queA).